Here is a 499-residue protein sequence, read N- to C-terminus: Putative alpha-galactosidase 8 (499 aa).

N-linked (GlcNAc...) asparagine glycans are attached at residues N154 and N191. D238 serves as the catalytic Nucleophile. N256 carries N-linked (GlcNAc...) asparagine glycosylation. D303 serves as the catalytic Proton donor.

This sequence belongs to the glycosyl hydrolase 27 family.

It localises to the secreted. It catalyses the reaction Hydrolysis of terminal, non-reducing alpha-D-galactose residues in alpha-D-galactosides, including galactose oligosaccharides, galactomannans and galactolipids.. Its function is as follows. Putative alpha-galactosidase involved in the degradation of simple oligosaccharides like melibiose, raffinose and stachyose, and of polymeric galacto(gluco)mannans. This chain is Putative alpha-galactosidase 8 (agl8), found in Emericella nidulans (strain FGSC A4 / ATCC 38163 / CBS 112.46 / NRRL 194 / M139) (Aspergillus nidulans).